Consider the following 130-residue polypeptide: Large ribosomal subunit protein bL12 (130 aa).

The protein belongs to the bacterial ribosomal protein bL12 family. In terms of assembly, homodimer. Part of the ribosomal stalk of the 50S ribosomal subunit. Forms a multimeric L10(L12)X complex, where L10 forms an elongated spine to which 2 to 4 L12 dimers bind in a sequential fashion. Binds GTP-bound translation factors.

Its function is as follows. Forms part of the ribosomal stalk which helps the ribosome interact with GTP-bound translation factors. Is thus essential for accurate translation. The protein is Large ribosomal subunit protein bL12 of Nostoc sp. (strain PCC 7120 / SAG 25.82 / UTEX 2576).